A 378-amino-acid chain; its full sequence is Cytochrome b (378 aa).

The next 4 membrane-spanning stretches (helical) occupy residues 34–54 (FGSL…FLAM), 78–99 (WLLR…YLHV), 114–134 (WLIG…GYVL), and 179–199 (FFTF…IHLL). Positions 84 and 98 each coordinate heme b. Residues histidine 183 and histidine 197 each contribute to the heme b site. Residue histidine 202 participates in a ubiquinone binding. 4 helical membrane passes run 227–247 (FKDI…VLIS), 289–309 (LGGV…PFYN), 321–341 (INQV…WIGA), and 348–368 (YVLI…VNPL).

Belongs to the cytochrome b family. In terms of assembly, the main subunits of complex b-c1 are: cytochrome b, cytochrome c1 and the Rieske protein. The cofactor is heme b.

It is found in the mitochondrion inner membrane. Its function is as follows. Component of the ubiquinol-cytochrome c reductase complex (complex III or cytochrome b-c1 complex) that is part of the mitochondrial respiratory chain. The b-c1 complex mediates electron transfer from ubiquinol to cytochrome c. Contributes to the generation of a proton gradient across the mitochondrial membrane that is then used for ATP synthesis. The polypeptide is Cytochrome b (mt:Cyt-b) (Drosophila melanogaster (Fruit fly)).